The following is a 402-amino-acid chain: 2-pyrone synthase (402 aa).

8 residues coordinate acetoacetyl-CoA: Lys60, Arg63, Cys169, Leu272, Arg274, Gly310, Arg312, and Ala313. Cys169 is a catalytic residue.

Belongs to the thiolase-like superfamily. Chalcone/stilbene synthases family. In terms of tissue distribution, expressed in both vegetative and reproductive organs. The expression is strong in the leaf, scape (the inflorescence stem) and corolla (both in the ligule and the unpigmented tube), moderate in the bract and carpel, detectable in the root and pappus but not detectable in the stamen.

It carries out the reaction 2 malonyl-CoA + acetyl-CoA + 2 H(+) = triacetate lactone + 2 CO2 + 3 CoA. In terms of biological role, polyketide synthase, which uses acetyl-CoA and two condensation reactions with malonyl-CoA to form triacetic acid lactone (also called methylpyrone), a precursor of phytoalexin. May participate in insect and pathogen resistance. The polypeptide is 2-pyrone synthase (Gerbera hybrida (Daisy)).